Here is a 542-residue protein sequence, read N- to C-terminus: Glucose-6-phosphate isomerase (542 aa).

The active-site Proton donor is the glutamate 354. Catalysis depends on residues histidine 385 and lysine 505.

The protein belongs to the GPI family.

Its subcellular location is the cytoplasm. The enzyme catalyses alpha-D-glucose 6-phosphate = beta-D-fructose 6-phosphate. The protein operates within carbohydrate biosynthesis; gluconeogenesis. It participates in carbohydrate degradation; glycolysis; D-glyceraldehyde 3-phosphate and glycerone phosphate from D-glucose: step 2/4. Functionally, catalyzes the reversible isomerization of glucose-6-phosphate to fructose-6-phosphate. The chain is Glucose-6-phosphate isomerase from Nitrosospira multiformis (strain ATCC 25196 / NCIMB 11849 / C 71).